Consider the following 166-residue polypeptide: Outer membrane protein assembly factor BamE (166 aa).

A signal peptide spans 1 to 18 (MKRTVFPLAVAAALTLTA). Cys-19 is lipidated: N-palmitoyl cysteine. Cys-19 carries S-diacylglycerol cysteine lipidation. The tract at residues 143-166 (LFSNDDSGEMPVKPESKPSDLLNE) is disordered.

This sequence belongs to the BamE family. In terms of assembly, part of the Bam complex.

It is found in the cell outer membrane. Its function is as follows. Part of the outer membrane protein assembly complex, which is involved in assembly and insertion of beta-barrel proteins into the outer membrane. This is Outer membrane protein assembly factor BamE from Methylomonas methanica (strain DSM 25384 / MC09).